We begin with the raw amino-acid sequence, 278 residues long: MTIYNQSLSSKEYISHHLKNLQIDLRTFKIVQENDSSSFWFLNIDSLFFSFFLGIIFLLFFNYISKKFTIGTPGRIQASIEILVEFINSNVKDIFGHNTNKIIPPLSLTIFVWLFLMNLMDLIPVDFVPYIANFIFNISELRIVPSSDINITLSMSLGVFLLILYFGIKNKGIVVFLKEFFFQPFNNYLLIPVNLVLELISLLSKPVSLSLRLFGNIYSGELIFILISGLLPWWLQWILSVPWAIFHILIIILQAFIFMILTIIYLEMSLEKPDKNTI.

6 helical membrane-spanning segments follow: residues 41–61 (FLNI…LLFF), 108–128 (LTIF…VDFV), 149–168 (INIT…YFGI), 180–200 (FFFQ…LELI), 222–242 (LIFI…LSVP), and 244–264 (AIFH…LTII).

The protein belongs to the ATPase A chain family. F-type ATPases have 2 components, CF(1) - the catalytic core - and CF(0) - the membrane proton channel. CF(1) has five subunits: alpha(3), beta(3), gamma(1), delta(1), epsilon(1). CF(0) has three main subunits: a(1), b(2) and c(9-12). The alpha and beta chains form an alternating ring which encloses part of the gamma chain. CF(1) is attached to CF(0) by a central stalk formed by the gamma and epsilon chains, while a peripheral stalk is formed by the delta and b chains.

Its subcellular location is the cell membrane. Key component of the proton channel; it plays a direct role in the translocation of protons across the membrane. The protein is ATP synthase subunit a of Wigglesworthia glossinidia brevipalpis.